Reading from the N-terminus, the 195-residue chain is Thymidylate kinase (195 aa).

An ATP-binding site is contributed by 7–14 (GIDGSGKT).

It belongs to the thymidylate kinase family.

It catalyses the reaction dTMP + ATP = dTDP + ADP. Phosphorylation of dTMP to form dTDP in both de novo and salvage pathways of dTTP synthesis. The protein is Thymidylate kinase (tmk) of Aquifex aeolicus (strain VF5).